The following is a 529-amino-acid chain: Listeriolysin O (529 aa).

Positions 1–24 (MKKIMLVFITLILISLPIAQQTEA) are cleaved as a signal peptide. The interval 35–54 (SISSMAPPASPPASPKTPIE) is disordered. The next 4 beta stranded transmembrane spans lie at 214 to 227 (ESQL…AFKA), 234 to 243 (VNFGAISEGK), 312 to 321 (STKVKAAFDA), and 329 to 341 (SGDV…IKNS). Residues 483-493 (ECTGLAWEWWR) carry the Conserved undecapeptide motif. Residues 515–516 (TL) carry the Cholesterol binding motif.

The protein belongs to the cholesterol-dependent cytolysin family. Homooligomeric pore complex of 35 to 50 subunits; when inserted in the host membrane.

It localises to the secreted. The protein localises to the host membrane. Its subcellular location is the host cell membrane. Its activity is regulated as follows. Activity of listeriolysin O is regulated on multiple levels. It should be high in the phagosome, thereby allowing escape of the bacteria from the phagosomal compartment. Then, once inside the host cytosol, the activity must be controlled to prevent lysis of the host plasma membrane and loss of the intracellular environment. Functionally, a cholesterol-dependent toxin that causes cytolysis by forming pores in cholesterol containing host membranes. After binding to target membranes, the protein undergoes a major conformation change, leading to its insertion in the host membrane and formation of an oligomeric pore complex. Cholesterol is required for binding to host membranes, membrane insertion and pore formation; cholesterol binding is mediated by a Thr-Leu pair in the C-terminus. Acts as a major virulence factor required for the escape of bacteria from phagosomal vacuoles and entry into the host cytosol. Can be reversibly inactivated by oxidation. The chain is Listeriolysin O (hly) from Listeria monocytogenes serotype 4a (strain HCC23).